The following is a 193-amino-acid chain: Phosphoheptose isomerase (193 aa).

The SIS domain occupies 37–193; the sequence is LANAFKAGGK…QLIEKEMADQ (157 aa). 52 to 54 is a binding site for substrate; that stretch reads NGG. The Zn(2+) site is built by His61 and Glu65. Substrate contacts are provided by residues Glu65, 93-94, 119-121, Ser124, and Gln172; these read ND and STS. Zn(2+) is bound by residues Gln172 and His180.

Belongs to the SIS family. GmhA subfamily. Homotetramer. Zn(2+) serves as cofactor.

It localises to the cytoplasm. The enzyme catalyses 2 D-sedoheptulose 7-phosphate = D-glycero-alpha-D-manno-heptose 7-phosphate + D-glycero-beta-D-manno-heptose 7-phosphate. Its pathway is carbohydrate biosynthesis; D-glycero-D-manno-heptose 7-phosphate biosynthesis; D-glycero-alpha-D-manno-heptose 7-phosphate and D-glycero-beta-D-manno-heptose 7-phosphate from sedoheptulose 7-phosphate: step 1/1. Catalyzes the isomerization of sedoheptulose 7-phosphate in D-glycero-D-manno-heptose 7-phosphate. In Pectobacterium atrosepticum (strain SCRI 1043 / ATCC BAA-672) (Erwinia carotovora subsp. atroseptica), this protein is Phosphoheptose isomerase.